The primary structure comprises 163 residues: Interleukin-17F (163 aa).

A signal peptide spans 1–30 (MTVKSLHVTAMVKYLLLLILGLAFLRETAA). Asn-83 is a glycosylation site (N-linked (GlcNAc...) asparagine). Intrachain disulfides connect Cys-102-Cys-152 and Cys-107-Cys-154.

This sequence belongs to the IL-17 family. In terms of assembly, homodimer; disulfide-linked. Heterodimer with IL17A (IL17A-IL17F). Forms complexes with IL17RA and IL17RC receptors with 2:1 binding stoichiometry: two receptor chains for one interleukin molecule. IL17F homodimer forms predominantly complexes with IL17RC homodimer, whereas IL17A-IL17F favors complexes with IL17RA-IL17RC. IL17RA and IL17RC chains cannot distinguish between IL17A and IL17F molecules, potentially enabling the formation of topologically distinct complexes.

Its subcellular location is the secreted. Functionally, effector cytokine of innate and adaptive immune system involved in antimicrobial host defense and maintenance of tissue integrity. IL17A-IL17F signals via IL17RA-IL17RC heterodimeric receptor complex, triggering homotypic interaction of IL17RA and IL17RC chains with TRAF3IP2 adapter through SEFIR domains. This leads to downstream TRAF6-mediated activation of NF-kappa-B and MAPkinase pathways ultimately resulting in transcriptional activation of cytokines, chemokines, antimicrobial peptides and matrix metalloproteinases, with potential strong immune inflammation. IL17A-IL17F is primarily involved in host defense against extracellular bacteria and fungi by inducing neutrophilic inflammation. As signature effector cytokine of T-helper 17 cells (Th17), primarily induces neutrophil activation and recruitment at infection and inflammatory sites. Stimulates the production of antimicrobial beta-defensins DEFB1, DEFB103A, and DEFB104A by mucosal epithelial cells, limiting the entry of microbes through the epithelial barriers. IL17F homodimer can signal via IL17RC homodimeric receptor complex, triggering downstream activation of TRAF6 and NF-kappa-B signaling pathway. Via IL17RC induces transcriptional activation of IL33, a potent cytokine that stimulates group 2 innate lymphoid cells and adaptive T-helper 2 cells involved in pulmonary allergic response to fungi. Likely via IL17RC, promotes sympathetic innervation of peripheral organs by coordinating the communication between gamma-delta T cells and parenchymal cells. Stimulates sympathetic innervation of thermogenic adipose tissue by driving TGFB1 expression. Regulates the composition of intestinal microbiota and immune tolerance by inducing antimicrobial proteins that specifically control the growth of commensal Firmicutes and Bacteroidetes. In Callithrix jacchus (White-tufted-ear marmoset), this protein is Interleukin-17F (IL17F).